We begin with the raw amino-acid sequence, 317 residues long: Tyrosine--tRNA ligase (317 aa).

L-tyrosine is bound at residue Y33. Residues 38-46 (PSGKIHMGH) carry the 'HIGH' region motif. The L-tyrosine site is built by Y155, Q159, D162, and Q177. Residues 211-215 (KMASS) carry the 'KMSKS' region motif. S214 is an ATP binding site.

This sequence belongs to the class-I aminoacyl-tRNA synthetase family. TyrS type 3 subfamily. In terms of assembly, homodimer.

Its subcellular location is the cytoplasm. It carries out the reaction tRNA(Tyr) + L-tyrosine + ATP = L-tyrosyl-tRNA(Tyr) + AMP + diphosphate + H(+). Functionally, catalyzes the attachment of tyrosine to tRNA(Tyr) in a two-step reaction: tyrosine is first activated by ATP to form Tyr-AMP and then transferred to the acceptor end of tRNA(Tyr). This is Tyrosine--tRNA ligase from Methanosarcina barkeri (strain Fusaro / DSM 804).